Consider the following 232-residue polypeptide: MLTADIPPNQSIYIQNLNERIKKEELKRSLYCLFSQFGRILDVVALKTPKLRGQAWVTFSEVTAAGHAVRQMQNFPFYDKPMRLQYAKAKSDCLAKAEGTFVPKDKKRKQEEKVERKREDSQRPNTANGPSANGPSANNGVPAPSFQPSGQETMPPNNILFIQNLPHETTSMMLQLLFEQYPGFKEIRMIDAKPGIAFVEYEDDVQASIAMQPLQGFKITPQNPMVISFAKK.

One can recognise an RRM 1 domain in the interval 10 to 89; it reads QSIYIQNLNE…KPMRLQYAKA (80 aa). The tract at residues 100–157 is disordered; the sequence is TFVPKDKKRKQEEKVERKREDSQRPNTANGPSANGPSANNGVPAPSFQPSGQETMPPN. Residues 108-122 are compositionally biased toward basic and acidic residues; sequence RKQEEKVERKREDSQ. Composition is skewed to polar residues over residues 123 to 139 and 146 to 156; these read RPNTANGPSANGPSANN and FQPSGQETMPP. The 75-residue stretch at 158–232 folds into the RRM 2 domain; sequence NILFIQNLPH…NPMVISFAKK (75 aa).

This sequence belongs to the RRM U1 A/B'' family. In terms of assembly, component of the spliceosome where it is associated with snRNP U2.

Its subcellular location is the nucleus. It localises to the cajal body. The protein resides in the nucleoplasm. It is found in the cytoplasm. Functionally, involved in nuclear pre-mRNA splicing. The sequence is that of U2 small nuclear ribonucleoprotein B'' (U2B'') from Arabidopsis thaliana (Mouse-ear cress).